The sequence spans 274 residues: 2,3,4,5-tetrahydropyridine-2,6-dicarboxylate N-succinyltransferase (274 aa).

It belongs to the transferase hexapeptide repeat family.

The protein resides in the cytoplasm. The enzyme catalyses (S)-2,3,4,5-tetrahydrodipicolinate + succinyl-CoA + H2O = (S)-2-succinylamino-6-oxoheptanedioate + CoA. Its pathway is amino-acid biosynthesis; L-lysine biosynthesis via DAP pathway; LL-2,6-diaminopimelate from (S)-tetrahydrodipicolinate (succinylase route): step 1/3. In Salmonella agona (strain SL483), this protein is 2,3,4,5-tetrahydropyridine-2,6-dicarboxylate N-succinyltransferase.